The chain runs to 394 residues: Probable 6-phosphogluconolactonase ARB_02015 (394 aa).

The first 21 residues, 1 to 21 (MKTVPFLSLLQAGILTSGIVA), serve as a signal peptide directing secretion. Asn-51 carries N-linked (GlcNAc...) asparagine glycosylation.

The protein belongs to the cycloisomerase 2 family.

It is found in the secreted. The catalysed reaction is 6-phospho-D-glucono-1,5-lactone + H2O = 6-phospho-D-gluconate + H(+). Its pathway is carbohydrate degradation; pentose phosphate pathway; D-ribulose 5-phosphate from D-glucose 6-phosphate (oxidative stage): step 2/3. Functionally, catalyzes the hydrolysis of 6-phosphogluconolactone to 6-phosphogluconate. This chain is Probable 6-phosphogluconolactonase ARB_02015, found in Arthroderma benhamiae (strain ATCC MYA-4681 / CBS 112371) (Trichophyton mentagrophytes).